Here is a 304-residue protein sequence, read N- to C-terminus: HTH-type transcriptional regulator TtuA (304 aa).

An HTH lysR-type domain is found at 1-58; that stretch reads MELEQLKCFVAAAEELHFGRAAQKMGILPASLGRHLRLLEESLGTRLMSRTTRSVALT. Positions 18–37 form a DNA-binding region, H-T-H motif; the sequence is FGRAAQKMGILPASLGRHLR.

This sequence belongs to the LysR transcriptional regulatory family.

Its function is as follows. Transcriptional regulator of the ttuABCDE tartrate utilization operon. This chain is HTH-type transcriptional regulator TtuA (ttuA), found in Agrobacterium vitis (Rhizobium vitis).